The sequence spans 144 residues: MNVQVINKSKHPLPAYATELSAGMDIRANLSEPITLAPLQRCLVPTGIYIALPQGFEAQVRPRSGLAIKKGITVLNSPGTIDADYRGEVCIILVNLSSEPFVIEDGERIAQMVIARHEQAVWQEVEVLDETERGAGGFGHTGRG.

Residues 63–65, Asn76, and 80–82 contribute to the substrate site; these read RSG and TID.

Belongs to the dUTPase family. Requires Mg(2+) as cofactor.

It catalyses the reaction dUTP + H2O = dUMP + diphosphate + H(+). It functions in the pathway pyrimidine metabolism; dUMP biosynthesis; dUMP from dCTP (dUTP route): step 2/2. Its function is as follows. This enzyme is involved in nucleotide metabolism: it produces dUMP, the immediate precursor of thymidine nucleotides and it decreases the intracellular concentration of dUTP so that uracil cannot be incorporated into DNA. This is Deoxyuridine 5'-triphosphate nucleotidohydrolase from Bacteroides thetaiotaomicron (strain ATCC 29148 / DSM 2079 / JCM 5827 / CCUG 10774 / NCTC 10582 / VPI-5482 / E50).